Here is a 75-residue protein sequence, read N- to C-terminus: Small ribosomal subunit protein bS18 (75 aa).

This sequence belongs to the bacterial ribosomal protein bS18 family. As to quaternary structure, part of the 30S ribosomal subunit. Forms a tight heterodimer with protein bS6.

Binds as a heterodimer with protein bS6 to the central domain of the 16S rRNA, where it helps stabilize the platform of the 30S subunit. This chain is Small ribosomal subunit protein bS18, found in Vibrio atlanticus (strain LGP32) (Vibrio splendidus (strain Mel32)).